We begin with the raw amino-acid sequence, 856 residues long: Inactive rhomboid protein 2 (856 aa).

Residues 1–115 (MASADKNGGS…PGFRRQASLS (115 aa)) are disordered. At 1-409 (MASADKNGGS…HRPYFTYWLT (409 aa)) the chain is on the cytoplasmic side. Position 90 is a phosphoserine (serine 90). Basic and acidic residues predominate over residues 94–106 (PRSRWQESSEKRP). Residues serine 113 and serine 117 each carry the phosphoserine modification. The segment at 165 to 184 (PSQEAPSFQGTESPKPCKMP) is disordered. Positions 191–271 (ARGRAFRHPE…GQRCRVVKRS (81 aa)) are involved in interaction with FRMD8. Phosphoserine is present on residues serine 323, serine 325, and serine 328. Residues 410–430 (FVHVIITLLVICTYGIAPVGF) form a helical membrane-spanning segment. Residues 431 to 660 (AQHVTTQLVL…PDQFYRLWLS (230 aa)) are Lumenal-facing. The tract at residues 531–553 (GPPMDKSDLGQKRTSGAVCHQDP) is disordered. A helical membrane pass occupies residues 661–681 (LFLHAGVVHCLVSVVFQMTIL). At 682–692 (RDLEKLAGWHR) the chain is on the cytoplasmic side. A helical membrane pass occupies residues 693 to 713 (IAIIFILSGITGNLASAIFLP). The Lumenal portion of the chain corresponds to 714–715 (YR). Residues 716–736 (AEVGPAGSQFGLLACLFVELF) form a helical membrane-spanning segment. At 737-747 (QSWPLLERPWK) the chain is on the cytoplasmic side. Residues 748–768 (AFLNLSAIVLFLFICGLLPWI) form a helical membrane-spanning segment. Residues 769–773 (DNIAH) are Lumenal-facing. A helical membrane pass occupies residues 774 to 794 (IFGFLSGLLLAFAFLPYITFG). The Cytoplasmic segment spans residues 795–802 (TSDKYRKR). A helical membrane pass occupies residues 803 to 823 (ALILVSLLAFAGLFAALVLWL). At 824 to 856 (YIYPINWPWIEHLTCFPFTSRFCEKYELDQVLH) the chain is on the lumenal side.

The protein belongs to the peptidase S54 family. As to quaternary structure, interacts with EGF. Interacts (via cytoplasmic N-terminus) with FRMD8/iTAP; this interaction leads to mutual protein stabilization. Interacts with ADAM17/TACE. In terms of tissue distribution, found in the epidermis and esophageal epithelium.

The protein resides in the endoplasmic reticulum membrane. It is found in the cell membrane. Functionally, regulates ADAM17 protease, a sheddase of the epidermal growth factor (EGF) receptor ligands and TNF, thereby plays a role in sleep, cell survival, proliferation, migration and inflammation. Does not exhibit any protease activity on its own. The protein is Inactive rhomboid protein 2 (RHBDF2) of Homo sapiens (Human).